Reading from the N-terminus, the 602-residue chain is Proteasome-associated ATPase (602 aa).

Low complexity predominate over residues 1-17 (MSGPRSGSGSDGSTGRP). The interval 1 to 31 (MSGPRSGSGSDGSTGRPGDAESRRSAYEKET) is disordered. A compositionally biased stretch (basic and acidic residues) spans 18-31 (GDAESRRSAYEKET). Residues 19-106 (DAESRRSAYE…LKEEVDRLAQ (88 aa)) adopt a coiled-coil conformation. 289-294 (GCGKTL) is a binding site for ATP. The interval 601-602 (YL) is docks into pockets in the proteasome alpha-ring.

The protein belongs to the AAA ATPase family. In terms of assembly, homohexamer. Assembles into a hexameric ring structure that caps the 20S proteasome core. Strongly interacts with the prokaryotic ubiquitin-like protein Pup through a hydrophobic interface; the interacting region of ARC lies in its N-terminal coiled-coil domain. There is one Pup binding site per ARC hexamer ring. Upon ATP-binding, the C-terminus of ARC interacts with the alpha-rings of the proteasome core, possibly by binding to the intersubunit pockets.

It participates in protein degradation; proteasomal Pup-dependent pathway. Functionally, ATPase which is responsible for recognizing, binding, unfolding and translocation of pupylated proteins into the bacterial 20S proteasome core particle. May be essential for opening the gate of the 20S proteasome via an interaction with its C-terminus, thereby allowing substrate entry and access to the site of proteolysis. Thus, the C-termini of the proteasomal ATPase may function like a 'key in a lock' to induce gate opening and therefore regulate proteolysis. The polypeptide is Proteasome-associated ATPase (Frankia casuarinae (strain DSM 45818 / CECT 9043 / HFP020203 / CcI3)).